A 143-amino-acid polypeptide reads, in one-letter code: Large ribosomal subunit protein uL13 (143 aa).

Belongs to the universal ribosomal protein uL13 family. In terms of assembly, part of the 50S ribosomal subunit.

In terms of biological role, this protein is one of the early assembly proteins of the 50S ribosomal subunit, although it is not seen to bind rRNA by itself. It is important during the early stages of 50S assembly. This chain is Large ribosomal subunit protein uL13, found in Finegoldia magna (strain ATCC 29328 / DSM 20472 / WAL 2508) (Peptostreptococcus magnus).